We begin with the raw amino-acid sequence, 223 residues long: dITP/XTP pyrophosphatase (223 aa).

9–14 lines the substrate pocket; the sequence is TTNQNK. Asp71 serves as the catalytic Proton acceptor. Position 71 (Asp71) interacts with Mg(2+). Residues Ser72, 152-155, Lys175, and 180-181 contribute to the substrate site; these read FGYD and HR. Positions 203-223 are disordered; the sequence is LSEEKPAKPDHSEFEGNDWSK.

Belongs to the HAM1 NTPase family. Homodimer. The cofactor is Mg(2+).

It catalyses the reaction XTP + H2O = XMP + diphosphate + H(+). The enzyme catalyses dITP + H2O = dIMP + diphosphate + H(+). The catalysed reaction is ITP + H2O = IMP + diphosphate + H(+). In terms of biological role, pyrophosphatase that catalyzes the hydrolysis of nucleoside triphosphates to their monophosphate derivatives, with a high preference for the non-canonical purine nucleotides XTP (xanthosine triphosphate), dITP (deoxyinosine triphosphate) and ITP. Seems to function as a house-cleaning enzyme that removes non-canonical purine nucleotides from the nucleotide pool, thus preventing their incorporation into DNA/RNA and avoiding chromosomal lesions. The chain is dITP/XTP pyrophosphatase from Desulfotalea psychrophila (strain LSv54 / DSM 12343).